A 263-amino-acid polypeptide reads, in one-letter code: Shikimate dehydrogenase (NADP(+)) (263 aa).

Residues 14-16 (SLS) and Thr60 each bind shikimate. Lys64 acts as the Proton acceptor in catalysis. Asn85 and Asp100 together coordinate shikimate. Residues 123–127 (GAGGA), 146–151 (NRTPQR), and Leu205 contribute to the NADP(+) site. Tyr207 provides a ligand contact to shikimate. Gly228 is a binding site for NADP(+). Residue Gln235 coordinates shikimate.

This sequence belongs to the shikimate dehydrogenase family. In terms of assembly, homodimer.

It carries out the reaction shikimate + NADP(+) = 3-dehydroshikimate + NADPH + H(+). It participates in metabolic intermediate biosynthesis; chorismate biosynthesis; chorismate from D-erythrose 4-phosphate and phosphoenolpyruvate: step 4/7. Its function is as follows. Involved in the biosynthesis of the chorismate, which leads to the biosynthesis of aromatic amino acids. Catalyzes the reversible NADPH linked reduction of 3-dehydroshikimate (DHSA) to yield shikimate (SA). In Thermus thermophilus (strain ATCC 27634 / DSM 579 / HB8), this protein is Shikimate dehydrogenase (NADP(+)).